We begin with the raw amino-acid sequence, 594 residues long: Probable pectinesterase/pectinesterase inhibitor 33 (594 aa).

An N-terminal signal peptide occupies residues 1–22 (MLRGIFHICLLASFLLLPFSSA). A disordered region spans residues 28–75 (FTGGTDAPPPWDHNVSPPPETAPSPTPTSSPSTTSPPSPGPVAAPSPI). Residues 34-71 (APPPWDHNVSPPPETAPSPTPTSSPSTTSPPSPGPVAA) are compositionally biased toward pro residues. N-linked (GlcNAc...) asparagine glycans are attached at residues Asn77, Asn170, Asn213, and Asn226. The interval 78–237 (GSVSGDMTWW…SDLIGNCLAV (160 aa)) is pectinesterase inhibitor 33. Residues 280-581 (HLVVAQDRSG…TVGSLIAGGS (302 aa)) are pectinesterase 33. Positions 356 and 386 each coordinate substrate. Asp409 functions as the Proton donor; for pectinesterase activity in the catalytic mechanism. Cys423 and Cys443 are oxidised to a cystine. Catalysis depends on Asp430, which acts as the Nucleophile; for pectinesterase activity. Positions 498 and 500 each coordinate substrate.

In the N-terminal section; belongs to the PMEI family. It in the C-terminal section; belongs to the pectinesterase family. Expressed in siliques.

It is found in the secreted. The protein localises to the cell wall. It catalyses the reaction [(1-&gt;4)-alpha-D-galacturonosyl methyl ester](n) + n H2O = [(1-&gt;4)-alpha-D-galacturonosyl](n) + n methanol + n H(+). The protein operates within glycan metabolism; pectin degradation; 2-dehydro-3-deoxy-D-gluconate from pectin: step 1/5. Its function is as follows. Acts in the modification of cell walls via demethylesterification of cell wall pectin. The protein is Probable pectinesterase/pectinesterase inhibitor 33 (PME33) of Arabidopsis thaliana (Mouse-ear cress).